A 172-amino-acid chain; its full sequence is Endoribonuclease YbeY (172 aa).

Residues histidine 137, histidine 141, and histidine 147 each contribute to the Zn(2+) site.

The protein belongs to the endoribonuclease YbeY family. The cofactor is Zn(2+).

It is found in the cytoplasm. In terms of biological role, single strand-specific metallo-endoribonuclease involved in late-stage 70S ribosome quality control and in maturation of the 3' terminus of the 16S rRNA. The protein is Endoribonuclease YbeY of Dehalococcoides mccartyi (strain ATCC BAA-2266 / KCTC 15142 / 195) (Dehalococcoides ethenogenes (strain 195)).